Reading from the N-terminus, the 445-residue chain is Exodeoxyribonuclease 7 large subunit (445 aa).

This sequence belongs to the XseA family. As to quaternary structure, heterooligomer composed of large and small subunits.

Its subcellular location is the cytoplasm. The catalysed reaction is Exonucleolytic cleavage in either 5'- to 3'- or 3'- to 5'-direction to yield nucleoside 5'-phosphates.. Bidirectionally degrades single-stranded DNA into large acid-insoluble oligonucleotides, which are then degraded further into small acid-soluble oligonucleotides. The polypeptide is Exodeoxyribonuclease 7 large subunit (Limosilactobacillus reuteri (strain DSM 20016) (Lactobacillus reuteri)).